The chain runs to 232 residues: NKG2-D type II integral membrane protein (232 aa).

At 1–66 (MALIRDRKSH…IEKLKISPMF (66 aa)) the chain is on the cytoplasmic side. A helical; Signal-anchor for type II membrane protein membrane pass occupies residues 67–89 (VVRVLAIALAIRFTLNTLMWLAI). Residues 90–232 (FKETFQPVLC…NTYICMKRAV (143 aa)) lie on the Extracellular side of the membrane. 2 cysteine pairs are disulfide-bonded: Cys112–Cys121 and Cys115–Cys126. Positions 122-228 (HRNNCYQFFN…CANLNTYICM (107 aa)) constitute a C-type lectin domain. N-linked (GlcNAc...) asparagine glycans are attached at residues Asn137, Asn147, and Asn179. 2 disulfides stabilise this stretch: Cys143–Cys227 and Cys205–Cys219.

Homodimer; disulfide-linked. Heterohexamer composed of two subunits of KLRK1 and four subunits of HCST/DAP10. Isoform 1 (via transmembrane domain) interacts with HCST/DAP10; the interaction is required for KLRK1 cell surface expression on activated CD8(+) T-cells, but is dispensable on activated TYROBP-expressing NK cells. Isoform 2 (via transmembrane domain) interacts with HCST/DAP10 (via transmembrane domain); the interaction is required for KLRK1 NK cell surface expression and induces NK cell-mediated cytotoxicity. Isoform 2 (via transmembrane domain) interacts with TYROBP (via transmembrane domain); the interaction is required for KLRK1 NK cell surface expression and induce NK cell-mediated cytotoxicity and cytokine secretion. Isoform 1 does not interact with TYROBP. Interacts with CEACAM1; recruits PTPN6 that dephosphorylates VAV1. As to expression, expressed in natural killer (NK) cells, activated CD8(+) alpha-beta and gamma-delta T-cells and natural killer T (NKT) cells (at protein level). May be expressed on dendritic cell (DC). Isoform 1 is strongly expressed in natural killer (NK) cells. Isoform 2 is weakly expressed in natural killer (NK) cells. Isoform 1 and isoform 2 are expressed in stimulated, but not in unstimulated, CD8(+) T-cells and macrophages.

It localises to the cell membrane. Its function is as follows. Functions as an activating and costimulatory receptor involved in immunosurveillance upon binding to various cellular stress-inducible ligands displayed at the surface of autologous tumor cells and virus-infected cells. Provides both stimulatory and costimulatory innate immune responses on activated killer (NK) cells, leading to cytotoxic activity. Acts as a costimulatory receptor for T-cell receptor (TCR) in CD8(+) T-cell-mediated adaptive immune responses by amplifying T-cell activation. Stimulates perforin-mediated elimination of ligand-expressing tumor cells. Signaling involves calcium influx, culminating in the expression of TNF-alpha. Participates in NK cell-mediated bone marrow graft rejection. May play a regulatory role in differentiation and survival of NK cells. Binds to ligands belonging to various subfamilies of MHC class I-related glycoproteins including RAET1A, RAET1B, RAET1C, RAET1D, RAET1E, H60 and MULT1. This Mus musculus (Mouse) protein is NKG2-D type II integral membrane protein (Klrk1).